We begin with the raw amino-acid sequence, 179 residues long: Large ribosomal subunit protein uL5 (179 aa).

This sequence belongs to the universal ribosomal protein uL5 family. As to quaternary structure, part of the 50S ribosomal subunit; part of the 5S rRNA/L5/L18/L25 subcomplex. Contacts the 5S rRNA and the P site tRNA. Forms a bridge to the 30S subunit in the 70S ribosome.

Functionally, this is one of the proteins that bind and probably mediate the attachment of the 5S RNA into the large ribosomal subunit, where it forms part of the central protuberance. In the 70S ribosome it contacts protein S13 of the 30S subunit (bridge B1b), connecting the 2 subunits; this bridge is implicated in subunit movement. Contacts the P site tRNA; the 5S rRNA and some of its associated proteins might help stabilize positioning of ribosome-bound tRNAs. This is Large ribosomal subunit protein uL5 from Prochlorococcus marinus (strain NATL2A).